The following is an 89-amino-acid chain: uncharacterized protein (89 aa).

A disordered region spans residues 66–89; the sequence is RIKEQSSSSSATRTTQEPSLHLPD.

This is an uncharacterized protein from Cestrum parqui (CmYLCV).